We begin with the raw amino-acid sequence, 137 residues long: Small ribosomal subunit protein uS12 (137 aa).

The protein belongs to the universal ribosomal protein uS12 family. As to quaternary structure, part of the 30S ribosomal subunit. Contacts proteins S8 and S17. May interact with IF1 in the 30S initiation complex.

Its function is as follows. With S4 and S5 plays an important role in translational accuracy. Functionally, interacts with and stabilizes bases of the 16S rRNA that are involved in tRNA selection in the A site and with the mRNA backbone. Located at the interface of the 30S and 50S subunits, it traverses the body of the 30S subunit contacting proteins on the other side and probably holding the rRNA structure together. The combined cluster of proteins S8, S12 and S17 appears to hold together the shoulder and platform of the 30S subunit. This chain is Small ribosomal subunit protein uS12, found in Lactiplantibacillus plantarum (strain ATCC BAA-793 / NCIMB 8826 / WCFS1) (Lactobacillus plantarum).